An 81-amino-acid chain; its full sequence is Short neurotoxin 2 (81 aa).

A signal peptide spans 1–21 (MKTLLLTLVVVTIVCLDLGYT). 4 cysteine pairs are disulfide-bonded: C24–C43, C38–C60, C62–C73, and C74–C79.

Belongs to the three-finger toxin family. Short-chain subfamily. Type I alpha-neurotoxin sub-subfamily. In terms of tissue distribution, expressed by the venom gland.

Its subcellular location is the secreted. Functionally, binds to muscle nicotinic acetylcholine receptor (nAChR) and inhibit acetylcholine from binding to the receptor, thereby impairing neuromuscular transmission. The sequence is that of Short neurotoxin 2 from Tropidechis carinatus (Australian rough-scaled snake).